A 431-amino-acid polypeptide reads, in one-letter code: Histidine--tRNA ligase (431 aa).

Belongs to the class-II aminoacyl-tRNA synthetase family. In terms of assembly, homodimer.

It localises to the cytoplasm. The catalysed reaction is tRNA(His) + L-histidine + ATP = L-histidyl-tRNA(His) + AMP + diphosphate + H(+). This Ligilactobacillus salivarius (strain UCC118) (Lactobacillus salivarius) protein is Histidine--tRNA ligase.